We begin with the raw amino-acid sequence, 732 residues long: Catalase-peroxidase (732 aa).

The disordered stretch occupies residues 1–20; it reads MDKDSKRPVVGSTVRGGMSN. The tryptophyl-tyrosyl-methioninium (Trp-Tyr) (with M-246) cross-link spans 92 to 220; the sequence is WHSAGTYRMG…LAAVQMGLIY (129 aa). The Proton acceptor role is filled by His93. Residues 220-246 constitute a cross-link (tryptophyl-tyrosyl-methioninium (Tyr-Met) (with W-92)); that stretch reads YVNPEGPDGNPDPVAAGYDVIETFARM. A heme b-binding site is contributed by His261.

Belongs to the peroxidase family. Peroxidase/catalase subfamily. Homodimer or homotetramer. Heme b is required as a cofactor. Post-translationally, formation of the three residue Trp-Tyr-Met cross-link is important for the catalase, but not the peroxidase activity of the enzyme.

It carries out the reaction H2O2 + AH2 = A + 2 H2O. It catalyses the reaction 2 H2O2 = O2 + 2 H2O. Functionally, bifunctional enzyme with both catalase and broad-spectrum peroxidase activity. This is Catalase-peroxidase from Desulfosudis oleivorans (strain DSM 6200 / JCM 39069 / Hxd3) (Desulfococcus oleovorans).